A 214-amino-acid polypeptide reads, in one-letter code: UPF0725 protein At1g19565 (214 aa).

Positions 56 to 92 (EEEYEPSLPSSESPTDSCHADHESPDSPKYQQPAPGE) are disordered.

The protein belongs to the UPF0725 (EMB2204) family.

The chain is UPF0725 protein At1g19565 from Arabidopsis thaliana (Mouse-ear cress).